Here is a 266-residue protein sequence, read N- to C-terminus: tRNA pseudouridine synthase A (266 aa).

D51 (nucleophile) is an active-site residue. Y106 contributes to the substrate binding site.

It belongs to the tRNA pseudouridine synthase TruA family.

It carries out the reaction uridine(38/39/40) in tRNA = pseudouridine(38/39/40) in tRNA. Functionally, formation of pseudouridine at positions 38, 39 and 40 in the anticodon stem and loop of transfer RNAs. The chain is tRNA pseudouridine synthase A from Pyrococcus furiosus (strain ATCC 43587 / DSM 3638 / JCM 8422 / Vc1).